Consider the following 391-residue polypeptide: MSNLNLHNKRVMIREDLNVPMKNGKITNDERIVRALPTIQKAIEQKARVMILSHLGRPEEGKFEKEFSLAPVARLLSKKLNQKVPLINDWLKGVAVEPGQAILCENVRFNKGENENNTELAKRMAELCDIFVMDAFATAHRAQASTAGVAAYAKLACAGPLLISEVEALSRALENPQKPLVAVVGGSKVSTKIHLLENLLDKVDQLIVGGGIANTFLKAQGYSIGKSLCENEWLDAAQQFWEKAAEKNVSLPLPVDVIVADELSEDAKATVKNIDAVTSNESIFDVGPNTSATYAKLMAQAGTIVWNGPIGVFEIEAFSQGTRALAQAVAKSTAYSIVGGGDTLAALDKFNLTDQMSYVSTAGGAFLEFLEGKILPAIKILTQRAKEYEQK.

Residues 16–18 (DLN), Arg-31, 54–57 (HLGR), Arg-108, and Arg-141 contribute to the substrate site. ATP-binding positions include Lys-192, Glu-314, and 340-343 (GGDT).

The protein belongs to the phosphoglycerate kinase family. As to quaternary structure, monomer.

Its subcellular location is the cytoplasm. The catalysed reaction is (2R)-3-phosphoglycerate + ATP = (2R)-3-phospho-glyceroyl phosphate + ADP. Its pathway is carbohydrate degradation; glycolysis; pyruvate from D-glyceraldehyde 3-phosphate: step 2/5. In Coxiella burnetii (strain RSA 493 / Nine Mile phase I), this protein is Phosphoglycerate kinase.